The primary structure comprises 189 residues: H/ACA ribonucleoprotein complex subunit 1-like protein 2 (189 aa).

Residues 1-12 (MRPPRGGGSFRG) show a composition bias toward gly residues. Disordered stretches follow at residues 1–39 (MRPP…NYDE) and 129–189 (RFLP…RGRA). Residues 162 to 177 (GRGAPRGASRGFQPRG) are compositionally biased toward low complexity.

Belongs to the GAR1 family. As to quaternary structure, component of the small nucleolar ribonucleoprotein particle containing H/ACA-type snoRNAs (H/ACA snoRNPs).

It is found in the nucleus. The protein resides in the nucleolus. Required for ribosome biogenesis. Part of a complex which catalyzes pseudouridylation of rRNA. This involves the isomerization of uridine such that the ribose is subsequently attached to C5, instead of the normal N1. Pseudouridine ('psi') residues may serve to stabilize the conformation of rRNAs. The protein is H/ACA ribonucleoprotein complex subunit 1-like protein 2 of Arabidopsis thaliana (Mouse-ear cress).